A 54-amino-acid chain; its full sequence is UPF0391 membrane protein PFL_0093 (54 aa).

The next 2 helical transmembrane spans lie at 4–24 (WAIT…GGIA) and 29–49 (GIAK…FFFG).

This sequence belongs to the UPF0391 family.

Its subcellular location is the cell membrane. The polypeptide is UPF0391 membrane protein PFL_0093 (Pseudomonas fluorescens (strain ATCC BAA-477 / NRRL B-23932 / Pf-5)).